Here is a 248-residue protein sequence, read N- to C-terminus: ATP synthase subunit a, chloroplastic (248 aa).

Helical transmembrane passes span 38–58 (QVLL…VLTV), 96–116 (VPFI…GALV), 135–155 (INTT…AGLA), 200–220 (LVVA…VMLL), and 221–241 (GLFT…AYIG).

It belongs to the ATPase A chain family. As to quaternary structure, F-type ATPases have 2 components, CF(1) - the catalytic core - and CF(0) - the membrane proton channel. CF(1) has five subunits: alpha(3), beta(3), gamma(1), delta(1), epsilon(1). CF(0) has four main subunits: a, b, b' and c.

It is found in the plastid. The protein resides in the chloroplast thylakoid membrane. Functionally, key component of the proton channel; it plays a direct role in the translocation of protons across the membrane. The sequence is that of ATP synthase subunit a, chloroplastic from Welwitschia mirabilis (Tree tumbo).